Reading from the N-terminus, the 312-residue chain is Coproporphyrin III ferrochelatase (312 aa).

Residues Y13, R30, 46 to 47 (RY), S54, and Y125 each bind Fe-coproporphyrin III. Fe(2+) is bound by residues H183 and E264.

The protein belongs to the ferrochelatase family.

It is found in the cytoplasm. It catalyses the reaction Fe-coproporphyrin III + 2 H(+) = coproporphyrin III + Fe(2+). It participates in porphyrin-containing compound metabolism; protoheme biosynthesis. Functionally, involved in coproporphyrin-dependent heme b biosynthesis. Catalyzes the insertion of ferrous iron into coproporphyrin III to form Fe-coproporphyrin III. This Bacillus pumilus (strain SAFR-032) protein is Coproporphyrin III ferrochelatase.